The chain runs to 520 residues: Probable glycine dehydrogenase (decarboxylating) subunit 2 (520 aa).

Residues 1-29 (MWRQSRWNEPLITEMSRRGRRGALPPRPD) are disordered. An N6-(pyridoxal phosphate)lysine modification is found at Lys-279.

The protein belongs to the GcvP family. C-terminal subunit subfamily. As to quaternary structure, the glycine cleavage system is composed of four proteins: P, T, L and H. In this organism, the P 'protein' is a heterodimer of two subunits. It depends on pyridoxal 5'-phosphate as a cofactor.

It catalyses the reaction N(6)-[(R)-lipoyl]-L-lysyl-[glycine-cleavage complex H protein] + glycine + H(+) = N(6)-[(R)-S(8)-aminomethyldihydrolipoyl]-L-lysyl-[glycine-cleavage complex H protein] + CO2. In terms of biological role, the glycine cleavage system catalyzes the degradation of glycine. The P protein binds the alpha-amino group of glycine through its pyridoxal phosphate cofactor; CO(2) is released and the remaining methylamine moiety is then transferred to the lipoamide cofactor of the H protein. In Aeropyrum pernix (strain ATCC 700893 / DSM 11879 / JCM 9820 / NBRC 100138 / K1), this protein is Probable glycine dehydrogenase (decarboxylating) subunit 2.